Consider the following 165-residue polypeptide: UPF0114 protein in repA1-repA2 intergenic region (165 aa).

3 helical membrane passes run 15–35 (LMFP…VKFF), 53–73 (LVLI…LVMV), and 136–156 (IMWC…MAYI).

Belongs to the UPF0114 family.

Its subcellular location is the cell membrane. The sequence is that of UPF0114 protein in repA1-repA2 intergenic region from Buchnera aphidicola subsp. Thelaxes suberi.